The following is a 275-amino-acid chain: MGIRFYKPYTPGTRNRSMAEFDQITETKPEKHLTSWIPRSKGRNNRGIITSRHRGGGHKRLYRNIDFKRNKLGILGQVATIEYDPNRNARIAKVHYQDGEKRYILYPRGLQLGQTILSNFNAPITIGNSLPLHQIPLGTEIHNIELKPGSGGQLARAAGSVAQLVAKEGNFVTLRLPSGEIRLVSKSCWATIGQVGNVEQMNLTVGKAGKSRWLGRRPKVRGVVMNPVDHPHGGGEGRAPIGRSRPVTPWGRPALGQRTRNATKYSRNLIIRRRK.

The interval 223–255 (VVMNPVDHPHGGGEGRAPIGRSRPVTPWGRPAL) is disordered.

Belongs to the universal ribosomal protein uL2 family. In terms of assembly, part of the 50S ribosomal subunit.

The protein localises to the plastid. It is found in the chloroplast. The protein is Large ribosomal subunit protein uL2c (rpl2) of Pleurastrum terricola (Filamentous green alga).